The following is an 807-amino-acid chain: Probable phosphoketolase (807 aa).

This sequence belongs to the XFP family. Thiamine diphosphate serves as cofactor.

The chain is Probable phosphoketolase from Nitrosospira multiformis (strain ATCC 25196 / NCIMB 11849 / C 71).